The sequence spans 205 residues: Ribosomal RNA large subunit methyltransferase E (205 aa).

G60, W62, D80, D96, and D121 together coordinate S-adenosyl-L-methionine. K161 serves as the catalytic Proton acceptor.

The protein belongs to the class I-like SAM-binding methyltransferase superfamily. RNA methyltransferase RlmE family.

It is found in the cytoplasm. It carries out the reaction uridine(2552) in 23S rRNA + S-adenosyl-L-methionine = 2'-O-methyluridine(2552) in 23S rRNA + S-adenosyl-L-homocysteine + H(+). Its function is as follows. Specifically methylates the uridine in position 2552 of 23S rRNA at the 2'-O position of the ribose in the fully assembled 50S ribosomal subunit. In Azoarcus sp. (strain BH72), this protein is Ribosomal RNA large subunit methyltransferase E.